The sequence spans 313 residues: tRNA-cytidine(32) 2-sulfurtransferase (313 aa).

A PP-loop motif motif is present at residues 60–65 (SGGKDS). 3 residues coordinate [4Fe-4S] cluster: Cys-135, Cys-138, and Cys-226.

It belongs to the TtcA family. Homodimer. Mg(2+) is required as a cofactor. It depends on [4Fe-4S] cluster as a cofactor.

It localises to the cytoplasm. It catalyses the reaction cytidine(32) in tRNA + S-sulfanyl-L-cysteinyl-[cysteine desulfurase] + AH2 + ATP = 2-thiocytidine(32) in tRNA + L-cysteinyl-[cysteine desulfurase] + A + AMP + diphosphate + H(+). The protein operates within tRNA modification. Catalyzes the ATP-dependent 2-thiolation of cytidine in position 32 of tRNA, to form 2-thiocytidine (s(2)C32). The sulfur atoms are provided by the cysteine/cysteine desulfurase (IscS) system. In Delftia acidovorans (strain DSM 14801 / SPH-1), this protein is tRNA-cytidine(32) 2-sulfurtransferase.